Here is a 201-residue protein sequence, read N- to C-terminus: Guanylyl cyclase-activating protein 1 (201 aa).

Glycine 2 carries N-myristoyl glycine lipidation. Position 3 is a deamidated asparagine (asparagine 3). EF-hand domains lie at 31 to 49 (SGQL…KNLS), 51 to 86 (SASQ…VLKG), 87 to 122 (KVEQ…IRAI), and 131 to 166 (TAEE…DQML). 15 residues coordinate Ca(2+): aspartate 64, asparagine 66, aspartate 68, tyrosine 70, glutamate 75, aspartate 100, aspartate 102, asparagine 104, cysteine 106, glutamate 111, aspartate 144, asparagine 146, aspartate 148, glutamate 150, and glutamate 155.

As to quaternary structure, homodimer. In the retina, it is expressed in rod and cone photoreceptors.

The protein localises to the membrane. The protein resides in the photoreceptor inner segment. Its subcellular location is the cell projection. It is found in the cilium. It localises to the photoreceptor outer segment. Its function is as follows. Stimulates retinal guanylyl cyclase when free calcium ions concentration is low and inhibits guanylyl cyclase when free calcium ions concentration is elevated. This Ca(2+)-sensitive regulation of retinal guanylyl cyclase is a key event in recovery of the dark state of rod photoreceptors following light exposure. May be involved in cone photoreceptor light response and recovery of response in bright light. The polypeptide is Guanylyl cyclase-activating protein 1 (GUCA1A) (Homo sapiens (Human)).